The chain runs to 1083 residues: Carbamoyl phosphate synthase large chain (1083 aa).

The segment at 1-402 (MPRRDDIKKI…SFQKALRGLE (402 aa)) is carboxyphosphate synthetic domain. Residues arginine 129, arginine 169, glycine 175, glycine 176, glutamate 208, isoleucine 210, glutamate 215, glycine 241, valine 242, histidine 243, glutamine 285, and glutamate 299 each coordinate ATP. Positions 133 to 328 (KQAMDKIGLD…IAKIAAKLAV (196 aa)) constitute an ATP-grasp 1 domain. Mg(2+) contacts are provided by glutamine 285, glutamate 299, and asparagine 301. Residues glutamine 285, glutamate 299, and asparagine 301 each coordinate Mn(2+). The tract at residues 403-557 (VGAFGFGSDP…YSTYESETEV (155 aa)) is oligomerization domain. Residues 558-944 (PAKGDKKRVV…AFAKSQLAAG (387 aa)) are carbamoyl phosphate synthetic domain. Positions 683–878 (SSLIDELGLR…VANLATKVMA (196 aa)) constitute an ATP-grasp 2 domain. Residues arginine 719, arginine 758, leucine 760, glutamate 765, glycine 790, valine 791, histidine 792, serine 793, glutamine 833, and glutamate 849 each coordinate ATP. Mg(2+) contacts are provided by glutamine 833, glutamate 849, and asparagine 851. 3 residues coordinate Mn(2+): glutamine 833, glutamate 849, and asparagine 851. The MGS-like domain maps to 945 to 1083 (TVLPESGKIF…SLQRRYAQNV (139 aa)). Residues 945–1083 (TVLPESGKIF…SLQRRYAQNV (139 aa)) are allosteric domain.

This sequence belongs to the CarB family. Composed of two chains; the small (or glutamine) chain promotes the hydrolysis of glutamine to ammonia, which is used by the large (or ammonia) chain to synthesize carbamoyl phosphate. Tetramer of heterodimers (alpha,beta)4. Mg(2+) is required as a cofactor. Requires Mn(2+) as cofactor.

It carries out the reaction hydrogencarbonate + L-glutamine + 2 ATP + H2O = carbamoyl phosphate + L-glutamate + 2 ADP + phosphate + 2 H(+). The catalysed reaction is hydrogencarbonate + NH4(+) + 2 ATP = carbamoyl phosphate + 2 ADP + phosphate + 2 H(+). Its pathway is amino-acid biosynthesis; L-arginine biosynthesis; carbamoyl phosphate from bicarbonate: step 1/1. It participates in pyrimidine metabolism; UMP biosynthesis via de novo pathway; (S)-dihydroorotate from bicarbonate: step 1/3. Its function is as follows. Large subunit of the glutamine-dependent carbamoyl phosphate synthetase (CPSase). CPSase catalyzes the formation of carbamoyl phosphate from the ammonia moiety of glutamine, carbonate, and phosphate donated by ATP, constituting the first step of 2 biosynthetic pathways, one leading to arginine and/or urea and the other to pyrimidine nucleotides. The large subunit (synthetase) binds the substrates ammonia (free or transferred from glutamine from the small subunit), hydrogencarbonate and ATP and carries out an ATP-coupled ligase reaction, activating hydrogencarbonate by forming carboxy phosphate which reacts with ammonia to form carbamoyl phosphate. The polypeptide is Carbamoyl phosphate synthase large chain (Rhodopirellula baltica (strain DSM 10527 / NCIMB 13988 / SH1)).